Consider the following 1404-residue polypeptide: Microtubule organization protein AKNA (1404 aa).

2 disordered regions span residues 1 to 304 and 317 to 382; these read MASS…VSPL and QHKQ…RPLI. Ser-51 is subject to Phosphoserine. Residues 70–91 are compositionally biased toward acidic residues; that stretch reads WDPDMQDSEESSGEETEADDAS. Polar residues predominate over residues 185-203; that stretch reads KSWSSGTVSLRQPSDSLGS. Ser-302 carries the phosphoserine modification. A phosphoserine mark is found at Ser-485 and Ser-520. Positions 494 to 549 are disordered; the sequence is AEWWPDPAQDPQASEATGWPFPRTDLSPSSSPGVATPGRLPQSQGIATDQPSTGQT. Residues 534–549 show a composition bias toward polar residues; the sequence is PQSQGIATDQPSTGQT. A Phosphoserine modification is found at Ser-617. Residues 645-659 show a composition bias toward basic and acidic residues; that stretch reads MDQTQRETEPCRPDL. Residues 645–708 are disordered; sequence MDQTQRETEP…TSPGSSCTLP (64 aa). Composition is skewed to polar residues over residues 660–674 and 686–707; these read QDST…QSAH and DGQT…SCTL. A phosphoserine mark is found at Ser-750 and Ser-753. The PEST stretch occupies residues 754–787; it reads LPEALRDEDEDDLEEEEEEQDHQGPLEVDSPATA. 2 disordered regions span residues 755-1038 and 1085-1185; these read PEAL…STAN and HSTQ…RERV. Residues 759 to 773 are compositionally biased toward acidic residues; the sequence is RDEDEDDLEEEEEEQ. A compositionally biased stretch (basic and acidic residues) spans 803–813; sequence TQAEESHRDAT. Phosphoserine is present on residues Ser-831 and Ser-860. A PEST region spans residues 885–906; that stretch reads HTEEPWMVSPETDSGFVGSETS. 3 stretches are compositionally biased toward polar residues: residues 903-914, 921-933, and 963-974; these read SETSIVSPFTQT, HVST…QHLT, and SRTQQHFSSLSS. Ser-971 is modified (phosphoserine). The segment covering 1015-1029 has biased composition (low complexity); the sequence is TSPDSAPAPTAASTP. A compositionally biased stretch (polar residues) spans 1085-1098; the sequence is HSTQTQEKLGSSPS. The a.T hook DNA-binding region spans 1088–1096; it reads QTQEKLGSS. Phosphoserine is present on residues Ser-1144 and Ser-1145. Positions 1155–1167 are enriched in basic and acidic residues; sequence SSEKSRTFEEHPE. Ser-1200 carries the phosphoserine modification. 2 disordered regions span residues 1208–1235 and 1253–1286; these read SGTP…TTRG and SAEA…QTGS. The segment covering 1221 to 1235 has biased composition (polar residues); it reads TQDTGSAVSRDTTRG. Phosphoserine occurs at positions 1339, 1352, and 1389.

This sequence belongs to the AKNA family. Interacts with DCTN1. Interacts with MAPRE1/EB1. Interacts with ODF2. Interacts with CAMSAP3. Post-translationally, phosphorylated; phosphorylation regulates dissociation from and reassembly at the centrosome. In terms of tissue distribution, expressed in neural stem cells isolated at the peak of subventricular zone (SVZ): localizes at the subdistal appendages of the mother centriole in specific subtypes of neural stem cells and in almost all basal progenitors.

The protein resides in the cytoplasm. It is found in the cytoskeleton. Its subcellular location is the microtubule organizing center. It localises to the centrosome. The protein localises to the centriole. The protein resides in the nucleus. Its function is as follows. Centrosomal protein that plays a key role in cell delamination by regulating microtubule organization. Required for the delamination and retention of neural stem cells from the subventricular zone during neurogenesis. Also regulates the epithelial-to-mesenchymal transition in other epithelial cells. Acts by increasing centrosomal microtubule nucleation and recruiting nucleation factors and minus-end stabilizers, thereby destabilizing microtubules at the adherens junctions and mediating constriction of the apical endfoot. In addition, may also act as a transcription factor that specifically activates the expression of the CD40 receptor and its ligand CD40L/CD154, two cell surface molecules on lymphocytes that are critical for antigen-dependent-B-cell development. Binds to A/T-rich promoters. It is unclear how it can both act as a microtubule organizer and as a transcription factor; additional evidences are required to reconcile these two apparently contradictory functions. The protein is Microtubule organization protein AKNA of Mus musculus (Mouse).